A 109-amino-acid chain; its full sequence is Sperm-specific class P protein 16 (109 aa).

An MSP domain is found at 2 to 109 (SLTADPPACT…TVTIPMSATA (108 aa)).

In terms of tissue distribution, expressed at higher level in testis.

In Caenorhabditis elegans, this protein is Sperm-specific class P protein 16 (ssp-16).